The sequence spans 253 residues: uncharacterized protein (253 aa).

NADP(+) is bound at residue 6–30 (IITASDSGIGKECALLLAQQGFDIG). Ser140 contributes to the substrate binding site. Tyr153 acts as the Proton acceptor in catalysis.

The protein belongs to the short-chain dehydrogenases/reductases (SDR) family.

This is an uncharacterized protein from Escherichia coli (strain K12).